Here is a 316-residue protein sequence, read N- to C-terminus: MTRGNEKEEAPPQAKILGSFPTGIAPYAELMRVHRLLGFYLNTSPYLVGVAFCASISPTKIPITVLLHRTILLSIWSIFLRSAGCVWDDLIDMDLDSQISRTRTRPLPRGAVSPKNAFLLTVTLFACGGSVLIYLPWPCAVDCLIITFFALLYPFGKRFTDYPQITLVNIGWAIPMAMHSLGLDPLSQMKPTVCMFLFIGLVIIMIDVIYSRQDTEEDLKVGVKSMAVRFRESIELLSYSLLYASTGFLAMAGFFTGLGLSFFVVSVGGHFCGFWVLLKATRVGNSYGVESYAKSAFFLATLFWLFGFVIEYCLRN.

The next 7 membrane-spanning stretches (helical) occupy residues 36–56, 60–80, 131–151, 163–183, 191–211, 247–267, and 294–314; these read LLGF…CASI, KIPI…SIFL, VLIY…FFAL, PQIT…SLGL, PTVC…VIYS, GFLA…VVSV, and KSAF…EYCL.

This sequence belongs to the UbiA prenyltransferase family. Mg(2+) serves as cofactor.

It is found in the membrane. It carries out the reaction 3,5-dimethylorsellinate + (2E,6E)-farnesyl diphosphate = (3R)-3-farnesyl-6-hydroxy-2,3,5-trimethyl-4-oxocyclohexa-1,5-diene-1-carboxylate + diphosphate + H(+). The protein operates within secondary metabolite biosynthesis; terpenoid biosynthesis. In terms of biological role, prenytransferase; part of the gene cluster that mediates the biosynthesis of andrastins, meroterpenoid compounds that exhibit inhibitory activity against ras farnesyltransferase, suggesting that they could be promising leads for antitumor agents. The first step of the pathway is the synthesis of 3,5-dimethylorsellinic acid (DMOA) by the polyketide synthase adrD via condensation of one acetyl-CoA starter unit with 3 malonyl-CoA units and 2 methylations. DMAO is then converted to farnesyl-DMAO by the prenyltransferase adrG. The methyltransferase adrK catalyzes the methylation of the carboxyl group of farnesyl-DMAO to farnesyl-DMAO methyl ester which is further converted to epoxyfarnesyl-DMAO methyl ester by the FAD-dependent monooxygenase adrH. The terpene cyclase adrI then catalyzes the carbon skeletal rearrangement to generate the andrastin E, the first compound in the pathway having the andrastin scaffold, with the tetracyclic ring system. The post-cyclization tailoring enzymes adrF, adrE, adrJ, and adrA, are involved in the conversion of andrastin E into andrastin A. The short chain dehydrogenase adrF is responsible for the oxidation of the C-3 a hydroxyl group of andrastin E to yield the corresponding ketone, andrastin D. The ketoreductase adrE stereoselectively reduces the carbonyl moiety to reverse the stereochemistry of the C-3 position to yield andrastin F. The acetyltransferase adrJ is the acetyltransferase that attaches the acetyl group to the C-3 hydroxyl group of andrastin F to yield andrastin C. Finally, the cytochrome P450 monooxygenase adrA catalyzes two sequential oxidation reactions of the C-23 methyl group, to generate the corresponding alcohol andrastin B, and aldehyde andrastin A. The chain is Prenytransferase adrG from Penicillium roqueforti.